Reading from the N-terminus, the 121-residue chain is Large ribosomal subunit protein bL12 (121 aa).

The protein belongs to the bacterial ribosomal protein bL12 family. As to quaternary structure, homodimer. Part of the ribosomal stalk of the 50S ribosomal subunit. Forms a multimeric L10(L12)X complex, where L10 forms an elongated spine to which 2 to 4 L12 dimers bind in a sequential fashion. Binds GTP-bound translation factors.

Functionally, forms part of the ribosomal stalk which helps the ribosome interact with GTP-bound translation factors. Is thus essential for accurate translation. The polypeptide is Large ribosomal subunit protein bL12 (Erwinia tasmaniensis (strain DSM 17950 / CFBP 7177 / CIP 109463 / NCPPB 4357 / Et1/99)).